Consider the following 162-residue polypeptide: Protein archease (162 aa).

Ca(2+)-binding residues include D34, D161, and I162.

The protein belongs to the archease family. Component of the tRNA-splicing ligase complex.

In terms of biological role, component of the tRNA-splicing ligase complex required to facilitate the enzymatic turnover of catalytic subunit RTCB. Together with ddx1, acts by facilitating the guanylylation of RTCB, a key intermediate step in tRNA ligation. This Danio rerio (Zebrafish) protein is Protein archease (zbtb8os).